A 619-amino-acid polypeptide reads, in one-letter code: Lateral signaling target protein 2 homolog (619 aa).

Residues aspartate 501 to isoleucine 561 form an FYVE-type zinc finger. Cysteine 507, cysteine 510, cysteine 523, cysteine 526, cysteine 531, cysteine 534, cysteine 553, and cysteine 556 together coordinate Zn(2+). Residues histidine 598 to isoleucine 619 form a disordered region. Over residues aspartate 603–isoleucine 619 the composition is skewed to polar residues.

It belongs to the lst-2 family.

Its function is as follows. Negative regulator of epidermal growth factor receptor (EGFR) signaling. This chain is Lateral signaling target protein 2 homolog, found in Brugia malayi (Filarial nematode worm).